The sequence spans 436 residues: MGLARALRRLSGALDSGDSRAGDEEEAGPGLCRNGWAPAPVQSPVGRRRGRFVKKDGHCNVRFVNLGGQGARYLSDLFTTCVDVRWRWMCLLFSCSFLASWLLFGLAFWLIASLHGDLAAPPPPAPCFSHVASFLAAFLFALETQTSIGYGVRSVTEECPAAVAAVVLQCIAGCVLDAFVVGAVMAKMAKPKKRNETLVFSENAVVALRDHRLCLMWRVGNLRRSHLVEAHVRAQLLQPRVTPEGEYIPLDHQDVDVGFDGGTDRIFLVSPITIVHEIDSASPLYELGRAELARADFELVVILEGMVEATAMTTQCRSSYLPGELLWGHRFEPVLFQRGSQYEVDYRHFHRTYEVPGTPVCSAKELDERAEQASHSLKSSFPGSLTAFCYENELALSCCQEEDEDDETEEGNGVETEDGAASPRVLTPTLALTLPP.

Topologically, residues 1–83 (MGLARALRRL…LSDLFTTCVD (83 aa)) are cytoplasmic. The interval 14 to 43 (LDSGDSRAGDEEEAGPGLCRNGWAPAPVQS) is disordered. Cysteine 81 is subject to S-nitrosocysteine. The chain crosses the membrane as a helical span at residues 84–110 (VRWRWMCLLFSCSFLASWLLFGLAFWL). Topologically, residues 111-133 (IASLHGDLAAPPPPAPCFSHVAS) are extracellular. The helical; Pore-forming intramembrane region spans 134 to 150 (FLAAFLFALETQTSIGY). The Selectivity filter motif lies at 147-152 (SIGYGV). At 151-159 (GVRSVTEEC) the chain is on the extracellular side. A helical membrane pass occupies residues 160–187 (PAAVAAVVLQCIAGCVLDAFVVGAVMAK). Residues 188–436 (MAKPKKRNET…TPTLALTLPP (249 aa)) are Cytoplasmic-facing. Acidic residues predominate over residues 400–418 (QEEDEDDETEEGNGVETED). Residues 400 to 436 (QEEDEDDETEEGNGVETEDGAASPRVLTPTLALTLPP) are disordered. Low complexity predominate over residues 426 to 436 (LTPTLALTLPP).

Belongs to the inward rectifier-type potassium channel (TC 1.A.2.1) family. KCNJ14 subfamily. Expressed preferentially in retina.

Its subcellular location is the membrane. It carries out the reaction K(+)(in) = K(+)(out). Its activity is regulated as follows. Channel activity is regulated by variations of cytosolic pH; channels are activated by alkaline and inhibited by acidic pH values. Inhibited by Ba(2+) and Cs(+) in a voltage-dependent manner; sensitivity to those inhibitors is lower than in other Kir channels. Its function is as follows. Inward rectifier potassium channels are characterized by a greater tendency to allow potassium to flow into the cell rather than out of it. Their voltage dependence is regulated by the concentration of extracellular potassium; as external potassium is raised, the voltage range of the channel opening shifts to more positive voltages. This chain is ATP-sensitive inward rectifier potassium channel 14 (KCNJ14), found in Homo sapiens (Human).